A 122-amino-acid chain; its full sequence is Large ribosomal subunit protein uL14 (122 aa).

The protein belongs to the universal ribosomal protein uL14 family. In terms of assembly, part of the 50S ribosomal subunit. Forms a cluster with proteins L3 and L19. In the 70S ribosome, L14 and L19 interact and together make contacts with the 16S rRNA in bridges B5 and B8.

Its function is as follows. Binds to 23S rRNA. Forms part of two intersubunit bridges in the 70S ribosome. The polypeptide is Large ribosomal subunit protein uL14 (Cupriavidus metallidurans (strain ATCC 43123 / DSM 2839 / NBRC 102507 / CH34) (Ralstonia metallidurans)).